The sequence spans 347 residues: Transcription termination/antitermination protein NusA (347 aa).

The S1 motif domain maps to 112–184 (GEIVAGVIQR…REPLITLSRT (73 aa)). Positions 287 to 347 (ARAARVVVPD…GVSRGMAHDR (61 aa)) constitute a KH domain. The disordered stretch occupies residues 322-347 (DIRGDAPPPPPGQPEPGVSRGMAHDR).

This sequence belongs to the NusA family. In terms of assembly, monomer. Binds directly to the core enzyme of the DNA-dependent RNA polymerase and to nascent RNA.

The protein localises to the cytoplasm. In terms of biological role, participates in both transcription termination and antitermination. The polypeptide is Transcription termination/antitermination protein NusA (Mycobacterium bovis (strain ATCC BAA-935 / AF2122/97)).